The following is a 274-amino-acid chain: Thiamine kinase (274 aa).

Belongs to the thiamine kinase family.

The catalysed reaction is thiamine + ATP = thiamine phosphate + ADP + H(+). It participates in cofactor biosynthesis; thiamine diphosphate biosynthesis; thiamine phosphate from thiamine: step 1/1. Catalyzes the ATP-dependent phosphorylation of thiamine to thiamine phosphate. Is involved in thiamine salvage. The chain is Thiamine kinase from Escherichia coli (strain K12 / MC4100 / BW2952).